The following is a 424-amino-acid chain: UPF0229 protein PFL_5654 (424 aa).

The interval 85 to 108 (GEHIARPQGGGGGGGGRGKAGNSG) is disordered. Positions 92-108 (QGGGGGGGGRGKAGNSG) are enriched in gly residues.

Belongs to the UPF0229 family.

The sequence is that of UPF0229 protein PFL_5654 from Pseudomonas fluorescens (strain ATCC BAA-477 / NRRL B-23932 / Pf-5).